A 106-amino-acid chain; its full sequence is Oncosphere antigen B (106 aa).

The Fibronectin type-III domain maps to 11 to 106 (LPQHFRWSQV…QSELRSMCIK (96 aa)).

The chain is Oncosphere antigen B (ONCB) from Hydatigena taeniaeformis (Feline tapeworm).